The sequence spans 355 residues: Fructose-1,6-bisphosphatase (355 aa).

AMP is bound by residues 25–30 and 37–41; these read ILDQQH and TGEFS. Positions 78 and 107 each coordinate Mg(2+). Position 121–122 (121–122) interacts with AMP; it reads KY. Residues Asp-127, Ile-129, and Asp-130 each coordinate Mg(2+). 130–133 is a substrate binding site; the sequence is DGSS. Position 149 (Lys-149) interacts with AMP. Residues 230–233, 263–268, Tyr-284, and 294–296 contribute to the substrate site; these read NEGN, RYIGSM, and KLR. Residue Glu-300 participates in Mg(2+) binding.

This sequence belongs to the FBPase class 1 family. As to quaternary structure, homotetramer. It depends on Mg(2+) as a cofactor.

It carries out the reaction beta-D-fructose 1,6-bisphosphate + H2O = beta-D-fructose 6-phosphate + phosphate. Its pathway is carbohydrate biosynthesis; gluconeogenesis. Subject to complex allosteric regulation. The enzyme can assume an active R-state, or an inactive T-state. Intermediate conformations may exist. AMP acts as allosteric inhibitor. AMP binding affects the turnover of bound substrate and not the affinity for substrate. This chain is Fructose-1,6-bisphosphatase (FBP1), found in Kluyveromyces lactis (strain ATCC 8585 / CBS 2359 / DSM 70799 / NBRC 1267 / NRRL Y-1140 / WM37) (Yeast).